Consider the following 550-residue polypeptide: Efflux pump DEP3 (550 aa).

Positions 1–33 are disordered; the sequence is MSEQSTLAGPYTEKPGVESQNPTGDGKASFDET. Helical transmembrane passes span 44 to 64, 78 to 98, 109 to 129, 139 to 159, 172 to 192, 199 to 219, 242 to 262, 268 to 288, 319 to 339, 351 to 371, and 373 to 393; these read AIAY…NTIV, LELI…ILLW, WVYI…GAAP, VIAG…VSVL, STVV…AFAA, WGFY…MILF, AVIF…GGVV, GTII…IVLL, FLAS…FQFI, LLPL…LMPK, and GLIP…SALM. Asparagine 399 is a glycosylation site (N-linked (GlcNAc...) asparagine). A run of 3 helical transmembrane segments spans residues 410–430, 439–459, and 515–535; these read ILVG…VQSL, AVGA…AICG, and SIWA…WPLF.

The protein belongs to the major facilitator superfamily. TCR/Tet family.

It is found in the cell membrane. Functionally, efflux pump; part of the gene cluster that mediates the biosynthesis of depudecin, a highly oxidized eleven-carbon linear polyketide that acts as a histone deacetylase (HDAC) inhibitor and makes a small contribution to pathogenesis. Is presumed either to be responsible for exporting depudecin, to provide self-protection, or both. This Fusarium langsethiae protein is Efflux pump DEP3.